A 151-amino-acid polypeptide reads, in one-letter code: Ribosome maturation factor RimP (151 aa).

The protein belongs to the RimP family.

The protein resides in the cytoplasm. In terms of biological role, required for maturation of 30S ribosomal subunits. The sequence is that of Ribosome maturation factor RimP from Haemophilus influenzae (strain PittEE).